We begin with the raw amino-acid sequence, 46 residues long: Large ribosomal subunit protein bL36 (46 aa).

Belongs to the bacterial ribosomal protein bL36 family.

The chain is Large ribosomal subunit protein bL36 from Serratia proteamaculans (strain 568).